Reading from the N-terminus, the 703-residue chain is 1,4-alpha-glucan-branching enzyme (703 aa).

(1,4-alpha-D-glucosyl)n-binding residues include tryptophan 93 and lysine 130. Aspartate 355 functions as the Nucleophile in the catalytic mechanism. The Proton donor role is filled by glutamate 415.

This sequence belongs to the glycosyl hydrolase 13 family. GlgB subfamily.

The protein localises to the cytoplasm. The enzyme catalyses Transfers a segment of a (1-&gt;4)-alpha-D-glucan chain to a primary hydroxy group in a similar glucan chain.. The protein operates within glycan biosynthesis; glycogen biosynthesis. Functionally, glycogen-branching enzyme participates in the glycogen biosynthetic process along with glycogenin and glycogen synthase. Generates alpha-1,6-glucosidic branches from alpha-1,4-linked glucose chains, to increase solubility of the glycogen polymer. In Eremothecium gossypii (strain ATCC 10895 / CBS 109.51 / FGSC 9923 / NRRL Y-1056) (Yeast), this protein is 1,4-alpha-glucan-branching enzyme (GLC3).